The following is a 247-amino-acid chain: Cell division protein ZapD (247 aa).

Belongs to the ZapD family. Interacts with FtsZ.

It localises to the cytoplasm. Its function is as follows. Cell division factor that enhances FtsZ-ring assembly. Directly interacts with FtsZ and promotes bundling of FtsZ protofilaments, with a reduction in FtsZ GTPase activity. The chain is Cell division protein ZapD from Escherichia coli O139:H28 (strain E24377A / ETEC).